We begin with the raw amino-acid sequence, 210 residues long: HTH-type transcriptional repressor FabR (210 aa).

The 61-residue stretch at 10 to 70 (KTRRSLVEAA…TMVDESGLML (61 aa)) folds into the HTH tetR-type domain. The H-T-H motif DNA-binding region spans 33 to 52 (SLREVAREAGIAPTSFYRHF).

In terms of assembly, homodimer.

The protein localises to the cytoplasm. Its function is as follows. Represses the transcription of fabB, involved in unsaturated fatty acid (UFA) biosynthesis. By controlling UFA production, FabR directly influences the physical properties of the membrane bilayer. This Salmonella arizonae (strain ATCC BAA-731 / CDC346-86 / RSK2980) protein is HTH-type transcriptional repressor FabR.